The chain runs to 87 residues: Cytochrome c oxidase assembly factor 3, mitochondrial (87 aa).

The chain crosses the membrane as a helical span at residues 47–69 (NNLLTAGALGVSVLAIYGYSIFS).

It belongs to the COA3 family.

It localises to the mitochondrion membrane. In terms of biological role, plays a critical role in the biogenesis and activity of cytochrome c oxidase (COX) (complex IV). The sequence is that of Cytochrome c oxidase assembly factor 3, mitochondrial (Ccdc56) from Drosophila melanogaster (Fruit fly).